We begin with the raw amino-acid sequence, 349 residues long: Cell adhesion molecule CEACAM8 (349 aa).

The first 34 residues, 1–34 (MGPISAPSCRWRIPWQGLLLTASLFTFWNPPTTA), serve as a signal peptide directing secretion. The Ig-like V-type domain occupies 35–142 (QLTIEAVPSN…EVTGQFSVHP (108 aa)). Residues asparagine 104, asparagine 111, asparagine 115, asparagine 152, asparagine 173, asparagine 197, asparagine 224, asparagine 256, asparagine 274, asparagine 288, and asparagine 309 are each glycosylated (N-linked (GlcNAc...) asparagine). 2 consecutive Ig-like C2-type domains span residues 145–232 (PKPS…VTLN) and 237–319 (PDAP…ITVS). A disulfide bridge connects residues cysteine 167 and cysteine 215. The cysteines at positions 259 and 299 are disulfide-linked. Aspartate 320 carries GPI-anchor amidated aspartate lipidation. Positions 321-349 (ALVQGSSPGLSARATVSIMIGVLARVALI) are cleaved as a propeptide — removed in mature form.

This sequence belongs to the immunoglobulin superfamily. CEA family. Monomer. Heterodimer with CEACAM6; heterodimerizes via its Ig-like V-type domain. Glycosylated. Expressed in leukocytes of chronic myeloid Leukemia patients and bone marrow.

The protein resides in the cell membrane. The protein localises to the cell surface. Cell surface glycoprotein that plays a role in cell adhesion in a calcium-independent manner. Mediates heterophilic cell adhesion with other carcinoembryonic antigen-related cell adhesion molecules, such as CEACAM6. Heterophilic interaction with CEACAM8 occurs in activated neutrophils. In Homo sapiens (Human), this protein is Cell adhesion molecule CEACAM8.